We begin with the raw amino-acid sequence, 250 residues long: mRNA-decapping protein g5R (250 aa).

A Nudix hydrolase domain is found at 97-239 (QKFRKNWLLP…NLEPMIGPAF (143 aa)). The Nudix box signature appears at 132 to 153 (GKPKEDESDLTCAIREFEEETG). Glutamate 138 serves as a coordination point for Mg(2+). Catalysis depends on glutamate 147, which acts as the Nucleophile. Residues glutamate 151 and aspartate 173 each coordinate Mg(2+).

It belongs to the Nudix hydrolase family. DIPP subfamily. In terms of assembly, interacts with host RPL23A. Mg(2+) is required as a cofactor. Requires Mn(2+) as cofactor.

The protein localises to the host rough endoplasmic reticulum. The catalysed reaction is diphospho-myo-inositol polyphosphate + H2O = myo-inositol polyphosphate + phosphate.. Its function is as follows. Decapping enzyme required for the removal of the 5'-end m7GpppN cap tethered to viral and host mRNAs to allow their decay in cells. May therefore accelerate viral and cellular mRNA turnover to eliminate competing host mRNAs and allow stage-specific synthesis of viral proteins. Acceleration of the turnover of cellular transcripts may even promote the shutoff of host protein synthesis. In addition to the mRNA cap, g5R also efficiently hydrolyzes diphosphoinositol polyphosphates. Down-regulation of the level of PP-InsP5 (diphosphoinositol pentakisphosphate) may play a role in viral manipulation of the cellular secretory pathway, a step necessary for the formation of virions. Binds viral and cellular poly(A) mRNAs, thereby decreasing both types of mRNAs. In Ornithodoros (relapsing fever ticks), this protein is mRNA-decapping protein g5R.